The sequence spans 504 residues: Cytochrome P450 7A1 (504 aa).

A helical transmembrane segment spans residues 4–24 (TSLIWGIAIAACCCLWLILGI). Residue Cys-444 coordinates heme.

It belongs to the cytochrome P450 family. Requires heme as cofactor. As to expression, detected in liver.

The protein resides in the endoplasmic reticulum membrane. It is found in the microsome membrane. It catalyses the reaction cholesterol + reduced [NADPH--hemoprotein reductase] + O2 = 7alpha-hydroxycholesterol + oxidized [NADPH--hemoprotein reductase] + H2O + H(+). The enzyme catalyses 4beta-hydroxycholesterol + reduced [NADPH--hemoprotein reductase] + O2 = 4beta,7alpha-dihydroxycholesterol + oxidized [NADPH--hemoprotein reductase] + H2O + H(+). The catalysed reaction is lathosterol + reduced [NADPH--hemoprotein reductase] + O2 = 7alpha,8alpha-epoxy-5alpha-cholestan-3beta-ol + oxidized [NADPH--hemoprotein reductase] + H2O + H(+). It carries out the reaction lathosterol + reduced [NADPH--hemoprotein reductase] + O2 = 5alpha-cholestan-7-oxo-3beta-ol + oxidized [NADPH--hemoprotein reductase] + H2O + H(+). It catalyses the reaction 7-dehydrocholesterol + reduced [NADPH--hemoprotein reductase] + O2 = 7-oxocholesterol + oxidized [NADPH--hemoprotein reductase] + H2O + H(+). The enzyme catalyses (24S)-hydroxycholesterol + reduced [NADPH--hemoprotein reductase] + O2 = (24S)-7alpha-dihydroxycholesterol + oxidized [NADPH--hemoprotein reductase] + H2O + H(+). The catalysed reaction is (24R)-hydroxycholesterol + reduced [NADPH--hemoprotein reductase] + O2 = (24R)-7alpha-dihydroxycholesterol + oxidized [NADPH--hemoprotein reductase] + H2O + H(+). It functions in the pathway lipid metabolism; bile acid biosynthesis. It participates in steroid metabolism; cholesterol degradation. Its function is as follows. A cytochrome P450 monooxygenase involved in the metabolism of endogenous cholesterol and its oxygenated derivatives (oxysterols). Mechanistically, uses molecular oxygen inserting one oxygen atom into a substrate, and reducing the second into a water molecule, with two electrons provided by NADPH via cytochrome P450 reductase (CPR; NADPH-ferrihemoprotein reductase). Functions as a critical regulatory enzyme of bile acid biosynthesis and cholesterol homeostasis. Catalyzes the hydroxylation of carbon hydrogen bond at 7-alpha position of cholesterol, a rate-limiting step in cholesterol catabolism and bile acid biosynthesis. 7-alpha hydroxylates several oxysterols, including 4beta-hydroxycholesterol and 24-hydroxycholesterol. Catalyzes the oxidation of the 7,8 double bond of 7-dehydrocholesterol and lathosterol with direct and predominant formation of the 7-keto derivatives. The polypeptide is Cytochrome P450 7A1 (Homo sapiens (Human)).